The primary structure comprises 417 residues: Acetyltransferase nanB (417 aa).

Residues 1–24 (MRPSTTTLSLLVFLISSILLATTG) form the signal peptide. A run of 5 helical transmembrane segments spans residues 150-170 (LAVS…LKNI), 284-304 (YLNN…FNWI), 307-327 (VQDG…GYFL), 356-376 (VGAL…VYPF), and 389-409 (FVDV…AAAL).

This sequence belongs to the wax synthase family.

Its subcellular location is the membrane. It functions in the pathway secondary metabolite biosynthesis. Functionally, acetyltransferase; part of the gene cluster that mediates the biosynthesis of the benzazepine alkaloid nanangelenin A which contains an unprecedented 3,4-dihydro-1-benzazepine-2,5-dione-N-prenyl-N-acetoxy-anthranilamide scaffold. The first step of nanangelenin biosynthesis is catalyzed by the indoleamine 2,3-dioxygenase nanC which produces N-formyl-kynurenine through the catabolism of tryptophan. The two-module NRPS nanA then utilizes anthranilate (Ant) and L-kynurenine (L-Kyn) to assemble the dipeptide product nanangelenin B. The first adenylation domain of nanA (A1) loads anthranilate onto the T1 domain, while A2 loads kynurenine, generated through spontaneous nonenzymatic deformylation of the nanC-supplied N-formyl-kynurenine. The peptide bond formation between the tethered amino acids is catalyzed by the first condensation domain (C1) between anthranilate's carbonyl carbon and kynurenine's aliphatic primary amine. The second C domain (C2) catalyzes the final cyclization event between the aromatic amine of kynurenine and the tethered carbonyl carbon, yielding nanangelenin B. The terminal T3 domain enhances the catalytic efficiency of C2, suggesting the T2-tethered Ant-L-Kyn is transferred to T3 prior to cyclization by C2. Once released from nanA, nanangelenin B is then prenylated by the prenyltransferase nanD to form nanangelenin C. Nanangelenin C is then N-hydroxylated by the FAD-dependent monooxygenase nanF and further acetylated by the acetyltransferase nanB to yield nanangelenin F. Finally, the N-methyltransferase nanE methylates the amide nitrogen of 1-benzazepine to convert nanangelenin F into nanangelenin A. NanE is also able to methylate most of the intermediates of the pathway such as nanangelenin B and nanangelenin C to produce nanangelenin D and nanangelenin E, respectively. This chain is Acetyltransferase nanB, found in Aspergillus nanangensis.